The chain runs to 77 residues: Tachyplesin-1 (77 aa).

Residues 1–23 (MKKLVIALCLMMVLAVMVEEAEA) form the signal peptide. 2 disulfide bridges follow: cysteine 26–cysteine 39 and cysteine 30–cysteine 35. An Arginine amide modification is found at arginine 40. The propeptide occupies 41–77 (GKRNEVRQYRDRGYDVRAIPEETFFTRQDEDEDDDEE).

This sequence belongs to the tachyplesin/polyphemusin family. As to expression, hemocytes.

The protein resides in the secreted. In terms of biological role, significantly inhibits the growth of Gram-negative and Gram-positive bacteria. This is Tachyplesin-1 from Tachypleus tridentatus (Japanese horseshoe crab).